An 874-amino-acid chain; its full sequence is Alanine--tRNA ligase (874 aa).

Zn(2+) is bound by residues His562, His566, Cys663, and His667.

The protein belongs to the class-II aminoacyl-tRNA synthetase family. It depends on Zn(2+) as a cofactor.

It localises to the cytoplasm. It carries out the reaction tRNA(Ala) + L-alanine + ATP = L-alanyl-tRNA(Ala) + AMP + diphosphate. In terms of biological role, catalyzes the attachment of alanine to tRNA(Ala) in a two-step reaction: alanine is first activated by ATP to form Ala-AMP and then transferred to the acceptor end of tRNA(Ala). Also edits incorrectly charged Ser-tRNA(Ala) and Gly-tRNA(Ala) via its editing domain. This is Alanine--tRNA ligase from Bordetella pertussis (strain Tohama I / ATCC BAA-589 / NCTC 13251).